A 111-amino-acid polypeptide reads, in one-letter code: ADIVMTQTPSSVSAAVGGTVTIKCQASESIGNELAWYQQKPGQPPKLLIYRASKLASGVSSRFKGSGSGTEFTLTISGVQCDDAGIYYCQQDWNSNNVVNNFGGGTEVVVK.

The framework-1 stretch occupies residues 1-24; the sequence is ADIVMTQTPSSVSAAVGGTVTIKC. Residues 25-35 form a complementarity-determining-1 region; that stretch reads QASESIGNELA. The interval 36–50 is framework-2; it reads WYQQKPGQPPKLLIY. The interval 51–57 is complementarity-determining-2; that stretch reads RASKLAS. Residues 58-89 are framework-3; the sequence is GVSSRFKGSGSGTEFTLTISGVQCDDAGIYYC. Residues 90–101 form a complementarity-determining-3 region; that stretch reads QQDWNSNNVVNN. The tract at residues 102-111 is framework-4; the sequence is FGGGTEVVVK.

This Oryctolagus cuniculus (Rabbit) protein is Ig kappa chain V region 3368.